A 337-amino-acid chain; its full sequence is tRNA N6-adenosine threonylcarbamoyltransferase (337 aa).

2 residues coordinate Fe cation: His-111 and His-115. Residues 134-138, Asp-167, Gly-180, and Asn-272 contribute to the substrate site; that span reads LVSGG. Asp-300 contacts Fe cation.

The protein belongs to the KAE1 / TsaD family. Fe(2+) serves as cofactor.

It is found in the cytoplasm. The enzyme catalyses L-threonylcarbamoyladenylate + adenosine(37) in tRNA = N(6)-L-threonylcarbamoyladenosine(37) in tRNA + AMP + H(+). Required for the formation of a threonylcarbamoyl group on adenosine at position 37 (t(6)A37) in tRNAs that read codons beginning with adenine. Is involved in the transfer of the threonylcarbamoyl moiety of threonylcarbamoyl-AMP (TC-AMP) to the N6 group of A37, together with TsaE and TsaB. TsaD likely plays a direct catalytic role in this reaction. This is tRNA N6-adenosine threonylcarbamoyltransferase from Pectobacterium atrosepticum (strain SCRI 1043 / ATCC BAA-672) (Erwinia carotovora subsp. atroseptica).